Reading from the N-terminus, the 743-residue chain is Photosystem I P700 chlorophyll a apoprotein A2 (743 aa).

8 consecutive transmembrane segments (helical) span residues 46-69 (IFAT…FHVA), 135-158 (LYMG…LHLQ), 175-199 (LNHH…HVAI), 273-291 (MAHH…GHMY), 336-359 (LHFQ…QHMY), 375-401 (AALY…IFWV), 423-445 (AIIS…LYVH), and 526-544 (FLVH…LILV). Residues Cys568 and Cys577 each contribute to the [4Fe-4S] cluster site. 2 consecutive transmembrane segments (helical) span residues 584-605 (AFYL…YWHW) and 652-674 (LSVW…MFLI). His663, Met671, and Tyr679 together coordinate chlorophyll a. Phylloquinone is bound at residue Trp680. Residues 716 to 736 (LVGLTHFTVGYVLTYAAFLIA) form a helical membrane-spanning segment.

Belongs to the PsaA/PsaB family. The PsaA/B heterodimer binds the P700 chlorophyll special pair and subsequent electron acceptors. PSI consists of a core antenna complex that captures photons, and an electron transfer chain that converts photonic excitation into a charge separation. The cyanobacterial PSI reaction center is composed of one copy each of PsaA,B,C,D,E,F,I,J,K,L,M and X, and forms trimeric complexes. The cofactor is PSI electron transfer chain: 5 chlorophyll a, 1 chlorophyll a', 2 phylloquinones and 3 4Fe-4S clusters. PSI core antenna: 90 chlorophyll a, 22 carotenoids, 3 phospholipids and 1 galactolipid. P700 is a chlorophyll a/chlorophyll a' dimer, A0 is one or more chlorophyll a, A1 is one or both phylloquinones and FX is a shared 4Fe-4S iron-sulfur center..

It localises to the cellular thylakoid membrane. It carries out the reaction reduced [plastocyanin] + hnu + oxidized [2Fe-2S]-[ferredoxin] = oxidized [plastocyanin] + reduced [2Fe-2S]-[ferredoxin]. Functionally, psaA and PsaB bind P700, the primary electron donor of photosystem I (PSI), as well as the electron acceptors A0, A1 and FX. PSI is a plastocyanin/cytochrome c6-ferredoxin oxidoreductase, converting photonic excitation into a charge separation, which transfers an electron from the donor P700 chlorophyll pair to the spectroscopically characterized acceptors A0, A1, FX, FA and FB in turn. Oxidized P700 is reduced on the lumenal side of the thylakoid membrane by plastocyanin or cytochrome c6. The protein is Photosystem I P700 chlorophyll a apoprotein A2 of Mastigocladus laminosus (Fischerella sp.).